The following is a 375-amino-acid chain: Chaperone protein DnaJ (375 aa).

In terms of domain architecture, J spans 5–70; the sequence is DYYEILGISK…EKRAAYDQYG (66 aa). The CR-type zinc finger occupies 130 to 208; it reads GIIKEICIPT…CHGNGRVERS (79 aa). C143, C146, C160, C163, C182, C185, C196, and C199 together coordinate Zn(2+). CXXCXGXG motif repeat units follow at residues 143–150, 160–167, 182–189, and 196–203; these read CEKCRGTG, CMTCHGQG, CPTCHGHG, and CNKCHGNG.

The protein belongs to the DnaJ family. Homodimer. The cofactor is Zn(2+).

The protein resides in the cytoplasm. In terms of biological role, participates actively in the response to hyperosmotic and heat shock by preventing the aggregation of stress-denatured proteins and by disaggregating proteins, also in an autonomous, DnaK-independent fashion. Unfolded proteins bind initially to DnaJ; upon interaction with the DnaJ-bound protein, DnaK hydrolyzes its bound ATP, resulting in the formation of a stable complex. GrpE releases ADP from DnaK; ATP binding to DnaK triggers the release of the substrate protein, thus completing the reaction cycle. Several rounds of ATP-dependent interactions between DnaJ, DnaK and GrpE are required for fully efficient folding. Also involved, together with DnaK and GrpE, in the DNA replication of plasmids through activation of initiation proteins. The polypeptide is Chaperone protein DnaJ (Blochmanniella pennsylvanica (strain BPEN)).